A 122-amino-acid polypeptide reads, in one-letter code: MEIKEDVKYLESHEWFKKEGNIGIIGISDYAQSEMGDVVFIELPEVGDEVTADKACATVESVKAVFEIISPMTGKVVEINEELLDAPEKINEDAFGSWFFKVELKGESSKLMDAGKYKGLCK.

Positions 22–103 constitute a Lipoyl-binding domain; it reads IGIIGISDYA…AFGSWFFKVE (82 aa). N6-lipoyllysine is present on lysine 63.

It belongs to the GcvH family. In terms of assembly, the glycine cleavage system is composed of four proteins: P, T, L and H. (R)-lipoate serves as cofactor.

Functionally, the glycine cleavage system catalyzes the degradation of glycine. The H protein shuttles the methylamine group of glycine from the P protein to the T protein. The protein is Glycine cleavage system H protein of Treponema denticola (strain ATCC 35405 / DSM 14222 / CIP 103919 / JCM 8153 / KCTC 15104).